Here is a 423-residue protein sequence, read N- to C-terminus: Histidine--tRNA ligase (423 aa).

This sequence belongs to the class-II aminoacyl-tRNA synthetase family. As to quaternary structure, homodimer.

Its subcellular location is the cytoplasm. It carries out the reaction tRNA(His) + L-histidine + ATP = L-histidyl-tRNA(His) + AMP + diphosphate + H(+). This is Histidine--tRNA ligase from Halorhodospira halophila (strain DSM 244 / SL1) (Ectothiorhodospira halophila (strain DSM 244 / SL1)).